Here is a 196-residue protein sequence, read N- to C-terminus: Orotate phosphoribosyltransferase (196 aa).

Position 117-125 (117-125) interacts with 5-phospho-alpha-D-ribose 1-diphosphate; the sequence is EDIVTTGLS. Orotate is bound by residues Thr-121 and Arg-149.

It belongs to the purine/pyrimidine phosphoribosyltransferase family. PyrE subfamily. As to quaternary structure, homodimer. Mg(2+) serves as cofactor.

It catalyses the reaction orotidine 5'-phosphate + diphosphate = orotate + 5-phospho-alpha-D-ribose 1-diphosphate. It participates in pyrimidine metabolism; UMP biosynthesis via de novo pathway; UMP from orotate: step 1/2. Functionally, catalyzes the transfer of a ribosyl phosphate group from 5-phosphoribose 1-diphosphate to orotate, leading to the formation of orotidine monophosphate (OMP). This chain is Orotate phosphoribosyltransferase, found in Methylorubrum populi (strain ATCC BAA-705 / NCIMB 13946 / BJ001) (Methylobacterium populi).